The sequence spans 345 residues: Anthranilate phosphoribosyltransferase (345 aa).

5-phospho-alpha-D-ribose 1-diphosphate contacts are provided by residues glycine 84, 87–88 (GD), threonine 92, 94–97 (NIST), 112–120 (KHGNRSVSS), and serine 124. Glycine 84 is an anthranilate binding site. A Mg(2+)-binding site is contributed by serine 96. Asparagine 115 is a binding site for anthranilate. Arginine 170 contributes to the anthranilate binding site. Residues aspartate 229 and glutamate 230 each coordinate Mg(2+).

The protein belongs to the anthranilate phosphoribosyltransferase family. As to quaternary structure, homodimer. Requires Mg(2+) as cofactor.

It catalyses the reaction N-(5-phospho-beta-D-ribosyl)anthranilate + diphosphate = 5-phospho-alpha-D-ribose 1-diphosphate + anthranilate. The protein operates within amino-acid biosynthesis; L-tryptophan biosynthesis; L-tryptophan from chorismate: step 2/5. Its function is as follows. Catalyzes the transfer of the phosphoribosyl group of 5-phosphorylribose-1-pyrophosphate (PRPP) to anthranilate to yield N-(5'-phosphoribosyl)-anthranilate (PRA). In Xanthomonas campestris pv. campestris (strain B100), this protein is Anthranilate phosphoribosyltransferase.